A 147-amino-acid chain; its full sequence is Large ribosomal subunit protein uL15 (147 aa).

The tract at residues 1–54 is disordered; that stretch reads MRLSDIKPTPGSMKKRTRVGRGIGSGKGKTSGKGHKGQKARGRGKVHPWFEGGQ. Residues 30–46 show a composition bias toward basic residues; sequence TSGKGHKGQKARGRGKV.

Belongs to the universal ribosomal protein uL15 family. In terms of assembly, part of the 50S ribosomal subunit.

Its function is as follows. Binds to the 23S rRNA. This is Large ribosomal subunit protein uL15 from Thermosipho melanesiensis (strain DSM 12029 / CIP 104789 / BI429).